Consider the following 331-residue polypeptide: DNA-directed RNA polymerase subunit alpha (331 aa).

Positions Met-1 to Arg-237 are alpha N-terminal domain (alpha-NTD). The interval Phe-251–Asn-331 is alpha C-terminal domain (alpha-CTD).

It belongs to the RNA polymerase alpha chain family. As to quaternary structure, homodimer. The RNAP catalytic core consists of 2 alpha, 1 beta, 1 beta' and 1 omega subunit. When a sigma factor is associated with the core the holoenzyme is formed, which can initiate transcription.

The catalysed reaction is RNA(n) + a ribonucleoside 5'-triphosphate = RNA(n+1) + diphosphate. Its function is as follows. DNA-dependent RNA polymerase catalyzes the transcription of DNA into RNA using the four ribonucleoside triphosphates as substrates. In Buchnera aphidicola subsp. Baizongia pistaciae (strain Bp), this protein is DNA-directed RNA polymerase subunit alpha.